We begin with the raw amino-acid sequence, 243 residues long: Probable transcriptional regulatory protein LJ_0904 (243 aa).

Residues 1 to 22 (MSGHSKWHNIQGRKNAQDAKRG) are disordered.

The protein belongs to the TACO1 family.

Its subcellular location is the cytoplasm. This chain is Probable transcriptional regulatory protein LJ_0904, found in Lactobacillus johnsonii (strain CNCM I-12250 / La1 / NCC 533).